A 283-amino-acid chain; its full sequence is Nucleoid occlusion protein (283 aa).

Positions 1–26 (MKQPFSRLFGFGDKQDQEMETGKQEE) are disordered. Positions 13–26 (DKQDQEMETGKQEE) are enriched in basic and acidic residues. A DNA-binding region (H-T-H motif) is located at residues 143–162 (ESLAQRLGKGQSTIANKLRL).

It belongs to the ParB family.

It is found in the cytoplasm. The protein localises to the nucleoid. Functionally, effects nucleoid occlusion by binding relatively nonspecifically to DNA and preventing the assembly of the division machinery in the vicinity of the nucleoid, especially under conditions that disturb the cell cycle. It helps to coordinate cell division and chromosome segregation by preventing the formation of the Z ring through the nucleoid, which would cause chromosome breakage. The protein is Nucleoid occlusion protein of Halalkalibacterium halodurans (strain ATCC BAA-125 / DSM 18197 / FERM 7344 / JCM 9153 / C-125) (Bacillus halodurans).